We begin with the raw amino-acid sequence, 243 residues long: DNA repair protein RecO (243 aa).

Belongs to the RecO family.

Functionally, involved in DNA repair and RecF pathway recombination. This Frankia casuarinae (strain DSM 45818 / CECT 9043 / HFP020203 / CcI3) protein is DNA repair protein RecO.